A 291-amino-acid chain; its full sequence is Formamidopyrimidine-DNA glycosylase (291 aa).

Proline 2 functions as the Schiff-base intermediate with DNA in the catalytic mechanism. The active-site Proton donor is glutamate 3. The active-site Proton donor; for beta-elimination activity is the lysine 58. Residues histidine 100, arginine 123, and lysine 166 each contribute to the DNA site. Residues 257–291 form an FPG-type zinc finger; that stretch reads SVYGREGKECSRCGMHIVRIVQSGRSSFYCPQCQK. Arginine 281 (proton donor; for delta-elimination activity) is an active-site residue.

Belongs to the FPG family. In terms of assembly, monomer. Requires Zn(2+) as cofactor.

The catalysed reaction is Hydrolysis of DNA containing ring-opened 7-methylguanine residues, releasing 2,6-diamino-4-hydroxy-5-(N-methyl)formamidopyrimidine.. It catalyses the reaction 2'-deoxyribonucleotide-(2'-deoxyribose 5'-phosphate)-2'-deoxyribonucleotide-DNA = a 3'-end 2'-deoxyribonucleotide-(2,3-dehydro-2,3-deoxyribose 5'-phosphate)-DNA + a 5'-end 5'-phospho-2'-deoxyribonucleoside-DNA + H(+). Functionally, involved in base excision repair of DNA damaged by oxidation or by mutagenic agents. Acts as a DNA glycosylase that recognizes and removes damaged bases. Has a preference for oxidized purines, such as 7,8-dihydro-8-oxoguanine (8-oxoG). Has AP (apurinic/apyrimidinic) lyase activity and introduces nicks in the DNA strand. Cleaves the DNA backbone by beta-delta elimination to generate a single-strand break at the site of the removed base with both 3'- and 5'-phosphates. The polypeptide is Formamidopyrimidine-DNA glycosylase (Bartonella bacilliformis (strain ATCC 35685 / KC583 / Herrer 020/F12,63)).